The primary structure comprises 663 residues: Heparan-alpha-glucosaminide N-acetyltransferase (663 aa).

Positions 1–24 (MTGARASAAEQRRAGRSGQARAAE) are disordered. Topologically, residues 1 to 190 (MTGARASAAE…LAVNEDPVDS (190 aa)) are lumenal, vesicle. 3 N-linked (GlcNAc...) asparagine glycosylation sites follow: asparagine 94, asparagine 142, and asparagine 162. An intrachain disulfide couples cysteine 151 to cysteine 462. The chain crosses the membrane as a helical span at residues 191-211 (NLPVSIAFLIGLAVIIVISFL). At 212–275 (RLLLSLDDFN…PRLRSVDTFR (64 aa)) the chain is on the cytoplasmic side. Phosphoserine occurs at positions 243 and 245. The helical transmembrane segment at 276 to 296 (GIALILMVFVNYGGGKYWYFK) threads the bilayer. Residue histidine 297 is part of the active site. Topologically, residues 297 to 302 (HASWNG) are lumenal, vesicle. Residues 303–323 (LTVADLVFPWFVFIMGSSIFL) form a helical membrane-spanning segment. Residues 324–345 (SMTSILQRGCSKFRLLGKIAWR) are Cytoplasmic-facing. A helical transmembrane segment spans residues 346 to 366 (SFLLICIGIIIVNPNYCLGPL). Residues 367-374 (SWDKVRIP) lie on the Lumenal, vesicle side of the membrane. A helical transmembrane segment spans residues 375–395 (GVLQRLGVTYFVVAVLELLFA). The Cytoplasmic segment spans residues 396–420 (KPVPEHCASERSCLSLRDITSSWPQ). The helical transmembrane segment at 421–441 (WLLILVLEGLWLGLTFLLPVP) threads the bilayer. At 442–500 (GCPTGYLGPGGIGDFGKYPNCTGGAAGYIDRLLLGDDHLYQHPSSAVLYHTEVAYDPEG) the chain is on the lumenal, vesicle side. A helical membrane pass occupies residues 501–521 (ILGTINSIVMAFLGVQAGKIL). Residues 522–529 (LYYKARTK) are Cytoplasmic-facing. The helical transmembrane segment at 530–550 (DILIRFTAWCCILGLISVALT) threads the bilayer. Topologically, residues 551-564 (KVSENEGFIPVNKN) are lumenal, vesicle. The chain crosses the membrane as a helical span at residues 565-585 (LWSLSYVTTLSSFAFFILLVL). Over 586–592 (YPVVDVK) the chain is Cytoplasmic. Residues 593-613 (GLWTGTPFFYPGMNSILVYVG) form a helical membrane-spanning segment. Residues 614 to 634 (HEVFENYFPFQWKLKDNQSHK) lie on the Lumenal, vesicle side of the membrane. The interval 624–635 (QWKLKDNQSHKE) is lysosomal targeting region. Residues 635 to 655 (EHLTQNIVATALWVLIAYILY) form a helical membrane-spanning segment. At 656–663 (RKKIFWKI) the chain is on the cytoplasmic side.

As to quaternary structure, homooligomer. Homooligomerization is necessary for enzyme activity. In terms of processing, undergoes intralysosomal proteolytic cleavage; occurs within the end of the first and/or the beginning of the second luminal domain and is essential for the activation of the enzyme. Glycosylated. In terms of tissue distribution, widely expressed, with highest level in leukocytes, heart, liver, skeletal muscle, lung, placenta and liver.

The protein resides in the lysosome membrane. The catalysed reaction is alpha-D-glucosaminyl-[heparan sulfate](n) + acetyl-CoA = N-acetyl-alpha-D-glucosaminyl-[heparan sulfate](n) + CoA + H(+). In terms of biological role, lysosomal acetyltransferase that acetylates the non-reducing terminal alpha-glucosamine residue of intralysosomal heparin or heparan sulfate, converting it into a substrate for luminal alpha-N-acetyl glucosaminidase. The chain is Heparan-alpha-glucosaminide N-acetyltransferase (HGSNAT) from Homo sapiens (Human).